The primary structure comprises 276 residues: Proteasome subunit beta type-8 (276 aa).

The propeptide at 1–72 (MALLDLCGAP…RKVQIEMAHG (72 aa)) is removed in mature form. Catalysis depends on Thr73, which acts as the Nucleophile.

The protein belongs to the peptidase T1B family. The 26S proteasome consists of a 20S proteasome core and two 19S regulatory subunits. The 20S proteasome core is composed of 28 subunits that are arranged in four stacked rings, resulting in a barrel-shaped structure. The two end rings are each formed by seven alpha subunits, and the two central rings are each formed by seven beta subunits. The catalytic chamber with the active sites is on the inside of the barrel. Component of the immunoproteasome, where it displaces the equivalent housekeeping subunit PSMB5. Component of the spermatoproteasome, a form of the proteasome specifically found in testis. Directly interacts with POMP. Interacts with TAP1. Post-translationally, autocleaved. The resulting N-terminal Thr residue of the mature subunit is responsible for the nucleophile proteolytic activity.

The protein localises to the cytoplasm. It is found in the nucleus. The enzyme catalyses Cleavage of peptide bonds with very broad specificity.. Functionally, the proteasome is a multicatalytic proteinase complex which is characterized by its ability to cleave peptides with Arg, Phe, Tyr, Leu, and Glu adjacent to the leaving group at neutral or slightly basic pH. The proteasome has an ATP-dependent proteolytic activity. This subunit is involved in antigen processing to generate class I binding peptides. May participate in the generation of spliced peptides resulting from the ligation of two separate proteasomal cleavage products that are not contiguous in the parental protein. Required for adipocyte differentiation. In Rattus norvegicus (Rat), this protein is Proteasome subunit beta type-8 (Psmb8).